Consider the following 369-residue polypeptide: 3-dehydroquinate synthase (369 aa).

NAD(+) is bound by residues 70-75, 104-108, 128-129, Lys-141, Lys-150, and 168-171; these read DAEDGK, GAATD, TT, and TLET. The Zn(2+) site is built by Glu-183, His-246, and His-262.

Belongs to the sugar phosphate cyclases superfamily. Dehydroquinate synthase family. The cofactor is Co(2+). Zn(2+) serves as cofactor. It depends on NAD(+) as a cofactor.

It localises to the cytoplasm. It catalyses the reaction 7-phospho-2-dehydro-3-deoxy-D-arabino-heptonate = 3-dehydroquinate + phosphate. It functions in the pathway metabolic intermediate biosynthesis; chorismate biosynthesis; chorismate from D-erythrose 4-phosphate and phosphoenolpyruvate: step 2/7. Its function is as follows. Catalyzes the conversion of 3-deoxy-D-arabino-heptulosonate 7-phosphate (DAHP) to dehydroquinate (DHQ). This chain is 3-dehydroquinate synthase, found in Rhodococcus erythropolis (strain PR4 / NBRC 100887).